A 117-amino-acid chain; its full sequence is Small ribosomal subunit protein uS13 (117 aa).

The tract at residues 94–117 is disordered; sequence SLPLRGQRTKTNARTRKGPRRLIK.

The protein belongs to the universal ribosomal protein uS13 family. As to quaternary structure, part of the 30S ribosomal subunit. Forms a loose heterodimer with protein S19. Forms two bridges to the 50S subunit in the 70S ribosome.

In terms of biological role, located at the top of the head of the 30S subunit, it contacts several helices of the 16S rRNA. In the 70S ribosome it contacts the 23S rRNA (bridge B1a) and protein L5 of the 50S subunit (bridge B1b), connecting the 2 subunits; these bridges are implicated in subunit movement. Contacts the tRNAs in the A and P-sites. This Vesicomyosocius okutanii subsp. Calyptogena okutanii (strain HA) protein is Small ribosomal subunit protein uS13.